The primary structure comprises 380 residues: MQDILLIKYGELALKGDNRSFFENKLIKNIKHALSDFKEVKVEKTHGRIYVECDGDIEEVIERLKKVFGIVGITKAKKTDLNLDEIFKAAVELMKGHEGKTFKVETKRPNKSFPYNSMEVSRRVGAAVLKNVKNLKVDVHNPDVLLNVEIREMAFVYAGVIEGIGGLPLGTNGKATVLLSGGIDSPVAAWMMMKRGVEVEAVYFHSPPYTSERAKDKVVDLCKVLSQYGQRIKLHVVHFTDLQLEIYEKCPPKFTTIIMRRMMMKIAEKIAQKNGSMALITGESLGQVASQTIESLYVTNASVSMPIFRPLIGMDKTEIIDLAQKISTFEISIRPYEDCCTIFVPKHPATKPKLEKVIEAEQKMEYQKYIDNFEEEVIEV.

One can recognise a THUMP domain in the interval 58 to 162; that stretch reads EEVIERLKKV…MAFVYAGVIE (105 aa). Residues 178–179, 203–204, Arg260, Gly282, and Gln291 contribute to the ATP site; these read LL and YF.

This sequence belongs to the ThiI family.

It localises to the cytoplasm. It carries out the reaction [ThiI sulfur-carrier protein]-S-sulfanyl-L-cysteine + a uridine in tRNA + 2 reduced [2Fe-2S]-[ferredoxin] + ATP + H(+) = [ThiI sulfur-carrier protein]-L-cysteine + a 4-thiouridine in tRNA + 2 oxidized [2Fe-2S]-[ferredoxin] + AMP + diphosphate. It catalyses the reaction [ThiS sulfur-carrier protein]-C-terminal Gly-Gly-AMP + S-sulfanyl-L-cysteinyl-[cysteine desulfurase] + AH2 = [ThiS sulfur-carrier protein]-C-terminal-Gly-aminoethanethioate + L-cysteinyl-[cysteine desulfurase] + A + AMP + 2 H(+). The protein operates within cofactor biosynthesis; thiamine diphosphate biosynthesis. In terms of biological role, catalyzes the ATP-dependent transfer of a sulfur to tRNA to produce 4-thiouridine in position 8 of tRNAs, which functions as a near-UV photosensor. Also catalyzes the transfer of sulfur to the sulfur carrier protein ThiS, forming ThiS-thiocarboxylate. This is a step in the synthesis of thiazole, in the thiamine biosynthesis pathway. The sulfur is donated as persulfide by IscS. This chain is Probable tRNA sulfurtransferase, found in Thermoanaerobacter sp. (strain X514).